Consider the following 336-residue polypeptide: MTALISQPDLLPPPAPERCPPQQTARLFRETPLLLDCGQVVQDVRVAYHTYGTPSDHAILVLHALTGTSAVHEWWPDFLGEGKPLDPTRDYIVCANVLGGCAGSTGPAELPRVNGEDPPLTLRDMARVGRALLEELGVRRVSVIGASMGGMLAYAWLLECPDLVDRAVIIGAPARHSPWAIGLNTAARNAIRAAPGGEGLKVARQIAMLSYRSPESFALTQSGWGTRRPGTPDITTYLEHQGEKLSTRFCERSYLALTGAMDRFQPTDAELRSIRVPVLVVGISSDVLYPPAEVRTYAGLLPRGQYLELQSPHGHDAFLIDPQGLPEAAAAFLHGA.

Positions 58-321 constitute an AB hydrolase-1 domain; sequence AILVLHALTG…PHGHDAFLID (264 aa). The active-site Nucleophile is the serine 147. Arginine 204 is a substrate binding site. Active-site residues include aspartate 286 and histidine 315. Aspartate 316 lines the substrate pocket.

It belongs to the AB hydrolase superfamily. MetX family. As to quaternary structure, homodimer.

The protein resides in the cytoplasm. It catalyses the reaction L-homoserine + acetyl-CoA = O-acetyl-L-homoserine + CoA. The protein operates within amino-acid biosynthesis; L-methionine biosynthesis via de novo pathway; O-acetyl-L-homoserine from L-homoserine: step 1/1. In terms of biological role, transfers an acetyl group from acetyl-CoA to L-homoserine, forming acetyl-L-homoserine. This Deinococcus geothermalis (strain DSM 11300 / CIP 105573 / AG-3a) protein is Homoserine O-acetyltransferase.